Reading from the N-terminus, the 839-residue chain is Homeobox-leucine zipper protein HOX10 (839 aa).

Disordered regions lie at residues 1–24 (MAAA…SGMD) and 132–157 (QNTP…RDAS). A DNA-binding region (homeobox) is located at residues 24–87 (DSGKYVRYTP…NRRCRDKQRK (64 aa)). The stretch at 91–134 (RLQAVNRKLTAMNKLLMEENERLQKQVSQLVHENAHMRQQLQNT) forms a coiled coil. Positions 155-383 (DASNPSGLLS…IAQETSGEVV (229 aa)) constitute an START domain.

This sequence belongs to the HD-ZIP homeobox family. Class III subfamily. In terms of tissue distribution, expressed in stems, leaf sheaths and blades and panicles.

The protein resides in the nucleus. In terms of biological role, probable transcription factor. This chain is Homeobox-leucine zipper protein HOX10 (HOX10), found in Oryza sativa subsp. indica (Rice).